A 374-amino-acid chain; its full sequence is Peptide chain release factor 2 (374 aa).

Residue Gln249 is modified to N5-methylglutamine.

It belongs to the prokaryotic/mitochondrial release factor family. Methylated by PrmC. Methylation increases the termination efficiency of RF2.

It localises to the cytoplasm. Its function is as follows. Peptide chain release factor 2 directs the termination of translation in response to the peptide chain termination codons UGA and UAA. This Ruegeria sp. (strain TM1040) (Silicibacter sp.) protein is Peptide chain release factor 2.